We begin with the raw amino-acid sequence, 393 residues long: Stearoyl-[acyl-carrier-protein] 9-desaturase, chloroplastic (393 aa).

The N-terminal 30 residues, 1 to 30 (MALNINGVSLKSHKMLPFPCSSARSERVFM), are a transit peptide targeting the chloroplast. Fe cation is bound by residues Glu-135, Glu-173, His-176, Glu-259, and His-262.

This sequence belongs to the fatty acid desaturase type 2 family. As to quaternary structure, homodimer. Requires Fe(2+) as cofactor.

It is found in the plastid. The protein localises to the chloroplast. It carries out the reaction octadecanoyl-[ACP] + 2 reduced [2Fe-2S]-[ferredoxin] + O2 + 2 H(+) = (9Z)-octadecenoyl-[ACP] + 2 oxidized [2Fe-2S]-[ferredoxin] + 2 H2O. Its pathway is lipid metabolism; fatty acid metabolism. In terms of biological role, converts stearoyl-ACP to oleoyl-ACP by introduction of a cis double bond between carbons 9 and 10 of the acyl chain. In Solanum tuberosum (Potato), this protein is Stearoyl-[acyl-carrier-protein] 9-desaturase, chloroplastic.